An 809-amino-acid polypeptide reads, in one-letter code: Zinc finger CCCH domain-containing protein 24 (809 aa).

An N-acetylmethionine modification is found at methionine 1. Residues 1–74 (METSSIEINE…NLESSDTKIT (74 aa)) are disordered. Polar residues predominate over residues 30-46 (ETSSIDELPSSDSNATD). Residues 51–65 (VGEKRKRADEDEKTN) are compositionally biased toward basic and acidic residues. The C3H1-type zinc finger occupies 79–107 (WWKTSLCSYFRREASCSHGNECKYAHGEA). S-adenosyl-L-methionine is bound by residues glutamine 536 and glutamate 586. Positions 652–693 (EEMTNSEHVADQNLPPSNTQVEELQDNEQKDSSSLEPEKTTK) are disordered. Over residues 678–692 (NEQKDSSSLEPEKTT) the composition is skewed to basic and acidic residues. Aspartate 704 lines the S-adenosyl-L-methionine pocket. The Nucleophile role is filled by cysteine 732.

It belongs to the class I-like SAM-binding methyltransferase superfamily. RNA M5U methyltransferase family.

The chain is Zinc finger CCCH domain-containing protein 24 from Arabidopsis thaliana (Mouse-ear cress).